The primary structure comprises 452 residues: Pup--protein ligase (452 aa).

Position 9 (E9) interacts with Mg(2+). R53 contacts ATP. Residue Y55 coordinates Mg(2+). The active-site Proton acceptor is the D57. E63 is a binding site for Mg(2+). ATP contacts are provided by T66 and W419.

Belongs to the Pup ligase/Pup deamidase family. Pup-conjugating enzyme subfamily.

The catalysed reaction is ATP + [prokaryotic ubiquitin-like protein]-L-glutamate + [protein]-L-lysine = ADP + phosphate + N(6)-([prokaryotic ubiquitin-like protein]-gamma-L-glutamyl)-[protein]-L-lysine.. Its pathway is protein degradation; proteasomal Pup-dependent pathway. The protein operates within protein modification; protein pupylation. Its function is as follows. Catalyzes the covalent attachment of the prokaryotic ubiquitin-like protein modifier Pup to the proteasomal substrate proteins, thereby targeting them for proteasomal degradation. This tagging system is termed pupylation. The ligation reaction involves the side-chain carboxylate of the C-terminal glutamate of Pup and the side-chain amino group of a substrate lysine. In Mycobacterium avium (strain 104), this protein is Pup--protein ligase.